We begin with the raw amino-acid sequence, 1086 residues long: NAD(P) transhydrogenase, mitochondrial (1086 aa).

A mitochondrion-targeting transit peptide spans 1-43; sequence MANLLKTVVTGCSCPFLSNLGSCKVLPGKKNFLRTFHTHRILW. At 44–474 the chain is on the mitochondrial matrix side; sequence CSAPVKPGIP…TITPFRKTMT (431 aa). Lys70 carries the post-translational modification N6-acetyllysine. Lys117 bears the N6-succinyllysine mark. An NAD(+)-binding site is contributed by 182–184; sequence RVT. Position 224 is an N6-succinyllysine (Lys224). Residues Val237, 257 to 259, and Gly287 each bind NAD(+); that span reads DTR. N6-succinyllysine is present on Lys294. 2 residues coordinate NAD(+): Glu300 and Leu319. Lys331 bears the N6-succinyllysine mark. Lys397 bears the N6-acetyllysine mark. 4 helical membrane passes run 475–493, 501–521, 527–546, and 558–578; these read SASV…GIAA, MVTT…GVTP, LMSV…LVLM, and GLAA…FLVT. Over 579–595 the chain is Mitochondrial matrix; the sequence is QRMLDMFKRPTDPPEYN. The next 5 membrane-spanning stretches (helical) occupy residues 596–616, 622–642, 646–666, 672–691, and 702–722; these read YLYL…LYSG, IMYL…STQG, LGNA…LGGL, LLAQ…LTIA, and LVAA…IAEY. The Cytoplasmic segment spans residues 723 to 739; the sequence is IIEYPHFATDAAANLTK. 5 helical membrane passes run 740-760, 778-797, 801-819, 833-853, and 857-879; these read IVAY…LVAY, HLLN…PFMM, FTTG…AVMG, VVIT…GFLL, and LLTI…MCVA. Over 880-1086 the chain is Mitochondrial matrix; that stretch reads MNRSLANVIL…QAKVRESYQK (207 aa). Residues Tyr933, 965–970, 1009–1011, 1026–1027, 1042–1049, and 1068–1069 contribute to the NADP(+) site; these read VAGRMP, NDT, GM, KRSLGVGY, and DA. Lys1079 carries the post-translational modification N6-succinyllysine.

The protein in the N-terminal section; belongs to the AlaDH/PNT family. It in the C-terminal section; belongs to the PNT beta subunit family. In terms of assembly, homodimer.

It is found in the mitochondrion inner membrane. It catalyses the reaction NAD(+) + NADPH + H(+)(in) = NADH + NADP(+) + H(+)(out). Its function is as follows. The transhydrogenation between NADH and NADP is coupled to respiration and ATP hydrolysis and functions as a proton pump across the membrane. May play a role in reactive oxygen species (ROS) detoxification in the adrenal gland. The chain is NAD(P) transhydrogenase, mitochondrial (NNT) from Bos taurus (Bovine).